A 326-amino-acid chain; its full sequence is Mitochondrial substrate carrier family protein R (326 aa).

3 Solcar repeats span residues 9–95 (TSPM…LKNN), 101–214 (KSSV…FKRI), and 226–318 (VIGI…LCDY). Transmembrane regions (helical) follow at residues 12–32 (MVTL…IAPL), 64–84 (LAGL…YSAI), 104–124 (VQIF…TYPL), 185–205 (GIWR…GVGY), 226–246 (VIGI…QTAA), and 290–310 (LFKG…VAFL).

It belongs to the mitochondrial carrier (TC 2.A.29) family.

The protein resides in the mitochondrion inner membrane. In terms of biological role, mitochondrial solute carriers shuttle metabolites, nucleotides, and cofactors through the mitochondrial inner membrane. May be involved in the accumulation of coenzyme A in the mitochondrial matrix. The sequence is that of Mitochondrial substrate carrier family protein R (mcfR) from Dictyostelium discoideum (Social amoeba).